Here is a 122-residue protein sequence, read N- to C-terminus: MIQNESYLNVADNSGAKKLRVIRVMGGFHKKYGTVGDIVVCSVRDVVPNTGIKKGEVVKAVIVRTKKPVRRPDGTYIRFDDNAAVLIDKFNEPRGTRVFGPVAREIREKGYMKIISLAPEVL.

The protein belongs to the universal ribosomal protein uL14 family. Part of the 50S ribosomal subunit. Forms a cluster with proteins L3 and L19. In the 70S ribosome, L14 and L19 interact and together make contacts with the 16S rRNA in bridges B5 and B8.

In terms of biological role, binds to 23S rRNA. Forms part of two intersubunit bridges in the 70S ribosome. The polypeptide is Large ribosomal subunit protein uL14 (Pseudothermotoga lettingae (strain ATCC BAA-301 / DSM 14385 / NBRC 107922 / TMO) (Thermotoga lettingae)).